Reading from the N-terminus, the 303-residue chain is Vesicle-trafficking protein SEC22c (303 aa).

Over 1–183 the chain is Cytoplasmic; sequence MSMILFASIV…EPAPNLRMKP (183 aa). A Longin domain is found at 8–119; sequence SIVRVRDGLP…YAFLEFDSVI (112 aa). A helical transmembrane segment spans residues 184-204; that stretch reads VTALGVLSLVLNIMCAALNLI. Residues 205 to 223 are Lumenal-facing; that stretch reads RGVHLAEHSLQVAQEEVGN. A helical membrane pass occupies residues 224-244; it reads ILAFFIPSVACIVQCYLYLFY. Residues 245 to 248 lie on the Cytoplasmic side of the membrane; sequence SPAR. The chain crosses the membrane as a helical span at residues 249–269; sequence TLKVLLMLASICLGNAYLHGL. Residue R270 is a topological domain, lumenal. Residues 271 to 291 traverse the membrane as a helical segment; that stretch reads NTWQILFHVGVAFLSSYQILT. Residues 292-303 are Cytoplasmic-facing; it reads RQLQERQSDYGV.

It belongs to the synaptobrevin family.

The protein resides in the endoplasmic reticulum membrane. Its function is as follows. May be involved in vesicle transport between the ER and the Golgi complex. The protein is Vesicle-trafficking protein SEC22c (Sec22c) of Mus musculus (Mouse).